The following is a 97-amino-acid chain: UPF0235 protein cbdbA1230 (97 aa).

Belongs to the UPF0235 family.

The polypeptide is UPF0235 protein cbdbA1230 (Dehalococcoides mccartyi (strain CBDB1)).